The sequence spans 381 residues: Spindlin interactor and repressor of chromatin-binding protein (381 aa).

The segment at 42–73 is disordered; sequence RVTQQEKTPPPRPSPLEAGSDGCEEPKQQVSW. K48 participates in a covalent cross-link: Glycyl lysine isopeptide (Lys-Gly) (interchain with G-Cter in SUMO2). 2 positions are modified to phosphoserine: S121 and S148. 3 disordered regions span residues 144 to 264, 283 to 320, and 339 to 381; these read AEQP…EVRH, QLRG…LRGT, and LQDW…GNGV. Glycyl lysine isopeptide (Lys-Gly) (interchain with G-Cter in SUMO2) cross-links involve residues K189 and K220. The segment covering 218 to 228 has biased composition (basic and acidic residues); the sequence is RWKEPPGEEPV. S248 and S251 each carry phosphoserine. The span at 287 to 299 shows a compositional bias: basic and acidic residues; it reads PDSKDSPKDREVA. Glycyl lysine isopeptide (Lys-Gly) (interchain with G-Cter in SUMO2) cross-links involve residues K290 and K294. Phosphoserine occurs at positions 308 and 310. Residue K374 forms a Glycyl lysine isopeptide (Lys-Gly) (interchain with G-Cter in SUMO2) linkage.

Interacts with SPIN1, SPIN2A, SPIN2B, SPIN3 and SPIN4. Interacts with TCF7L2 in a SPIN1-dependent manner. Interacts with PARP1; promoting PARP1 ADP-ribosyltransferase activity.

Its subcellular location is the nucleus. The protein resides in the chromosome. Its function is as follows. Chromatin protein that stabilizes SPIN1 and enhances its association with histone H3 trimethylated at both 'Lys-4' and 'Lys-9' (H3K4me3K9me3). Positively regulates poly-ADP-ribosylation in response to DNA damage; acts by facilitating PARP1 ADP-ribosyltransferase activity. The protein is Spindlin interactor and repressor of chromatin-binding protein of Homo sapiens (Human).